The chain runs to 237 residues: MRKLSRRLRELYAKVEDRPYAPLEALQLLKETATAKFPESAEAHIRLGIDPKYTDQQLRTTVALPKGTGQTIRVAVIARGEKVTEASAAGADVVGSEELIDEIQKGRMDFDLLIATPDMMPQVAKVGRILGPRGLMPSPKAGTVTFDLPQAIQEFKAGKVEFRADRSGIVHVLFGKASFSAEDLLVNLKALQESIDRNRPSGAKGRYWRSVYVAATMGPSIQVDINALRELKLAEAA.

The protein belongs to the universal ribosomal protein uL1 family. As to quaternary structure, part of the 50S ribosomal subunit.

In terms of biological role, binds directly to 23S rRNA. The L1 stalk is quite mobile in the ribosome, and is involved in E site tRNA release. Its function is as follows. Protein L1 is also a translational repressor protein, it controls the translation of the L11 operon by binding to its mRNA. This Thermosynechococcus vestitus (strain NIES-2133 / IAM M-273 / BP-1) protein is Large ribosomal subunit protein uL1.